We begin with the raw amino-acid sequence, 112 residues long: Protein lin-52 homolog (112 aa).

The protein belongs to the lin-52 family. In terms of assembly, component of the DREAM complex.

This Tetraodon nigroviridis (Spotted green pufferfish) protein is Protein lin-52 homolog (lin52).